We begin with the raw amino-acid sequence, 96 residues long: Large ribosomal subunit protein uL4 (96 aa).

The tract at residues 77 to 96 is disordered; it reads RAPNKKVKRRELKKNPLKNL. Residues 79–96 show a composition bias toward basic residues; that stretch reads PNKKVKRRELKKNPLKNL.

Belongs to the universal ribosomal protein uL4 family. In terms of assembly, component of the large ribosomal subunit.

It is found in the cytoplasm. Component of the large ribosomal subunit. The ribosome is a large ribonucleoprotein complex responsible for the synthesis of proteins in the cell. This Xenopus tropicalis (Western clawed frog) protein is Large ribosomal subunit protein uL4 (rpl4).